Here is a 304-residue protein sequence, read N- to C-terminus: MRCNACWRDLEGRAISTTCGHLLCTEDASKILSNDGACPICDQVLSKSLMKPVDINPNEEWINMAMAGISPQILMKSAYRSVMFYIAQRDLEMQYKMNRVVAQCRQKCEGMQAKFSEKMEQVHTAYQKMGKRCQMMEQEVENLTKDKQELQEKFSEKSRQKRKLDEMYDQLRSEYESVKRTAIQPANNFYPRHQEPDFFSNPAVNMMENRETIRKDRSFFSPATPGPKDEIWPARQNSSNSGPFDISTDSPAIPSDLGNRRAGRGHPVYGGGGTANPQSTLRNLILSPIKRSQLSRSRPQLFTL.

The RING-type; degenerate zinc-finger motif lies at 3–42; the sequence is CNACWRDLEGRAISTTCGHLLCTEDASKILSNDGACPICD. Residues 124–184 are a coiled coil; sequence TAYQKMGKRC…YESVKRTAIQ (61 aa). The segment at 218–279 is disordered; the sequence is SFFSPATPGP…GGGGTANPQS (62 aa). Over residues 235-250 the composition is skewed to polar residues; sequence RQNSSNSGPFDISTDS.

As to expression, expressed mostly in flower buds and roots.

The protein localises to the nucleus. Its subcellular location is the chromosome. The enzyme catalyses S-ubiquitinyl-[E2 ubiquitin-conjugating enzyme]-L-cysteine + [acceptor protein]-L-lysine = [E2 ubiquitin-conjugating enzyme]-L-cysteine + N(6)-ubiquitinyl-[acceptor protein]-L-lysine.. It participates in protein modification; protein ubiquitination. Its function is as follows. Ubiquitin E3 ligase required for class I crossover (CO) formation during meiosis. This chain is E3 ubiquitin-protein ligase CCNB1IP1 homolog (HEI10), found in Arabidopsis thaliana (Mouse-ear cress).